Reading from the N-terminus, the 415-residue chain is Multidrug resistance protein MdtA (415 aa).

The signal sequence occupies residues 1–21 (MKGSYKSRWVIVIVVVIAAIA). Disordered stretches follow at residues 32–60 (SRSAAPGATKQAQQSPAGGRRGMRSGPLA) and 392–415 (EAQSATTPEEKATSREYAKKGARS). Residues 399–415 (PEEKATSREYAKKGARS) are compositionally biased toward basic and acidic residues.

This sequence belongs to the membrane fusion protein (MFP) (TC 8.A.1) family. As to quaternary structure, part of a tripartite efflux system composed of MdtA, MdtB and MdtC.

It localises to the cell inner membrane. Its function is as follows. The MdtABC tripartite complex confers resistance against novobiocin and deoxycholate. The sequence is that of Multidrug resistance protein MdtA from Escherichia coli (strain 55989 / EAEC).